The following is a 432-amino-acid chain: MTELQQDVEDTKPAKVLGKRESKLGSAHSEAENGVEEKKKACRSPTAQSPTPSVEADSPDQKKIISLWSKSSFDGASLASDKNDCKTESKNDPKTERKKSSSSSQYKANMHFHKLFLSVPTEEPLKQSFTCALQKEILYQGKLFVSENWICFHSKVFGKDTKISIPAFSVTLIKKTKTALLVPNALIIATVTDRYIFVSLLSRDSTYKLLKSVCGHLENTSVGNSPNPSSAENSFRADRPSSLPLDFNDEFSDLDGVVQQRRQDMEGYSSSGSQTPESENSRDFHATESQTVLNVSKGEAKPTRADAHVNRVPEGKAKSLPVQGLSETVGILHKVKSQKCPMLHHILIFYAIVVCALIISTFYMRYRINTLEEQLGLLTSIVDTHNTEQAAPSGLRSQVQFNVEVLCQELTANIVKLEKIQNNLQKLLENGD.

The residue at position 1 (Met-1) is an N-acetylmethionine. Disordered regions lie at residues 1–61 (MTEL…SPDQ) and 74–106 (DGASLASDKNDCKTESKNDPKTERKKSSSSSQY). 2 stretches are compositionally biased toward basic and acidic residues: residues 9–39 (EDTKPAKVLGKRESKLGSAHSEAENGVEEKK) and 81–99 (DKNDCKTESKNDPKTERKK). A GRAM domain is found at 110 to 177 (MHFHKLFLSV…FSVTLIKKTK (68 aa)). The segment covering 220–233 (TSVGNSPNPSSAEN) has biased composition (polar residues). Residues 220–239 (TSVGNSPNPSSAENSFRADR) form a disordered region. Phosphoserine is present on residues Ser-225, Ser-242, and Ser-252. The segment at 262–285 (RQDMEGYSSSGSQTPESENSRDFH) is disordered. The segment covering 268 to 278 (YSSSGSQTPES) has biased composition (polar residues).

The polypeptide is GRAM domain-containing protein 2B (GRAMD2B) (Homo sapiens (Human)).